Reading from the N-terminus, the 194-residue chain is HTH-type transcriptional regulator BetI (194 aa).

An HTH tetR-type domain is found at 8 to 68 (EIRRAQLIDA…ATMRHVLRDL (61 aa)). Positions 31 to 50 (TLASVAQRANISTGIVSHYF) form a DNA-binding region, H-T-H motif.

The protein operates within amine and polyamine biosynthesis; betaine biosynthesis via choline pathway [regulation]. Its function is as follows. Repressor involved in the biosynthesis of the osmoprotectant glycine betaine. It represses transcription of the choline transporter BetT and the genes of BetAB involved in the synthesis of glycine betaine. This chain is HTH-type transcriptional regulator BetI, found in Burkholderia cenocepacia (strain HI2424).